The following is a 2027-amino-acid chain: Citron Rho-interacting kinase (2027 aa).

Met-1 carries the N-acetylmethionine modification. In terms of domain architecture, Protein kinase spans 97-360 (FEVRSLVGCG…FEGLCCHPFF (264 aa)). ATP is bound by residues 103–111 (VGCGHFAEV) and Lys-126. Residue Asp-221 is the Proton acceptor of the active site. One can recognise an AGC-kinase C-terminal domain in the interval 361-431 (SKIDWNNIRN…SKALGILGRS (71 aa)). A phosphoserine mark is found at Ser-433, Ser-440, Ser-480, and Ser-582. Residues 453–1297 (IKSKELQDSQ…SAREEAAHRK (845 aa)) adopt a coiled-coil conformation. The interaction with Rho/Rac stretch occupies residues 1091 to 1302 (LAVKEHKAEI…AAHRKATDHP (212 aa)). Tyr-1196 bears the Phosphotyrosine mark. The segment covering 1290-1303 (REEAAHRKATDHPH) has biased composition (basic and acidic residues). Disordered regions lie at residues 1290–1310 (REEAAHRKATDHPHPSTPATA) and 1322–1351 (SPEHQPSAMSLLAPPSSRRKESSTPEEFSR). Over residues 1327–1337 (PSAMSLLAPPS) the composition is skewed to low complexity. Residues 1339–1351 (RRKESSTPEEFSR) show a composition bias toward basic and acidic residues. The segment at 1362–1411 (PHRFNVGLNMRATKCAVCLDTVHFGRQASKCLECQVMCHPKCSTCLPATC) adopts a Phorbol-ester/DAG-type zinc-finger fold. Positions 1443 to 1563 (SLHLEGWMKV…WVTALESVVA (121 aa)) constitute a PH domain. One can recognise a CNH domain in the interval 1591-1881 (RLDMNCTLPF…RYLGPAISSG (291 aa)). Lys-1721 carries the post-translational modification N6-acetyllysine. The tract at residues 1905–2012 (ESGTEHHRGP…RGRLPAGAVR (108 aa)) is disordered. Ser-1940 carries the post-translational modification Phosphoserine. The span at 1948–2003 (SHPREPSTPHRYREGRTELRRDKSPGRPLEREKSPGRMLSTRRERSPGRLFEDSSR) shows a compositional bias: basic and acidic residues. An SH3-binding motif is present at residues 1953-1958 (PSTPHR). Residue Ser-1993 is modified to Phosphoserine. Thr-2013 is subject to Phosphothreonine.

This sequence belongs to the protein kinase superfamily. AGC Ser/Thr protein kinase family. As to quaternary structure, directly interacts with KIF14 depending on the activation state (stronger interaction with the kinase-dead form). Homodimer. Interacts with TTC3.

Its subcellular location is the cytoplasm. It carries out the reaction L-seryl-[protein] + ATP = O-phospho-L-seryl-[protein] + ADP + H(+). The enzyme catalyses L-threonyl-[protein] + ATP = O-phospho-L-threonyl-[protein] + ADP + H(+). In terms of biological role, plays a role in cytokinesis. Required for KIF14 localization to the central spindle and midbody. Putative RHO/RAC effector that binds to the GTP-bound forms of RHO and RAC1. It probably binds p21 with a tighter specificity in vivo. Displays serine/threonine protein kinase activity. Plays an important role in the regulation of cytokinesis and the development of the central nervous system. Phosphorylates MYL9/MLC2. The sequence is that of Citron Rho-interacting kinase (CIT) from Homo sapiens (Human).